The following is a 1465-amino-acid chain: MGAATSALNRRQLDKFEHIRLRPTGKKKYQIKHLIWAGKEMERFGLHERLLESEEGCKKIIEVLYPLEPTGSEGLKSLFNLVCVLFCVHKDKEVKDTEEAVAIVRQCCHLVEKERNAERNTTETSSGQKKNDKGVTVPPGGSQNFPAQQQGNAWIHVPLSPRTLNAWVKAVEEKKFGAEIVPMFQALSEGCTPYDINQMLNVLGDHQGALQIVKEIINEEAAQWDIAHPPPAGPLPAGQLRDPRGSDIAGTTSTVQEQLEWIYTANPRVDVGAIYRRWIILGLQKCVKMYNPVSVLDIRQGPKEAFKDYVDRFYKAIRAEQASGEVKQWMTESLLIQNANPDCKVILKGLGMHPTLEEMLTACQGVGGPSYKAKVMAEMMQNMQSQNMMQQGGQRGRPRPPVKCYNCGKFGHMQRQCPEPRKMRCLKCGKPGHLAKDCRGQVNFFRVWPVDGSETQKFSRRYSWGGANCAPSTESIRPCKEAPAAICRQGEAVEGTKEKTTSSESRLDRGIFFELPLWRRPIKTVYIEGVPIRALLDTGADDTIIKEADLQLSGTWKPKIIGGIGGGLNVKEYSDREVRLEDKILRGTILIGSTPINIIGRNILAPAGAKLVMGQLSEQIPITPVKLKEGARGPFLKQWPLSKEKIKALQEICDQLEKEGKISKIGGENAYNTPVFCIKKKDKSQWRMLVDFRELNKATQDFFEVQLGIPHPSGFEKMTEITVLDIGDAYYSIPLDPEFRKYTAFTIPSVNNQGPGTRYQFNCLPQGWKGSPTIFQNTAASILEEIKKELKPLTIVQYMDDLWVGSQEDEYTHDRLVEQLRMKLSAWGLETPDKKVQKKPPYEWMGYKLWPHKWQISSIELEDKEEWTVNDIQRLVGKLNWAAQLYPGLRTKNLCKLIRGKKNLLETVTWTEEAEAEYAENKEILKTEQEGTYYKPGRPIRAAVQKLEGGQWSYQFKQEGQVLKVGKYTKQKNTHTNEFRVLAGLVQKLCKESLVIWGELPVLELPIEREVWEQWWADYWQVSWIPDWEFVSTPPLVKLWYTLTKEPIPKEDVYYVDGACNRNSREGKAGYITQYGKQRVEKLENTTNQQAELMAIKMALEDSGPNVNIVTDSQYAMGILTAQPTQSDSPLIEQIIALMVQKHQIYLQWVPADKGIGGNEEIDKLVSQGMRKILFLEKIEEAQEEHERYHNNWRNLADTYGLPQIVAKEIVAMCPKCQIKGEPVHGQVDASPGVWQMDCTHLEGKVIIVAVHVASGFIEAEVIPRETGKETAKFLLKILSRWPITQLHTDNGPNFTSQEVAAMCWWGKIEHTTGVPYNPQSQGSIESMNKQLKEIIGKIRDDCQYTETAVLMACHIHNFKRKGGIGGLTPAERLINMITTQLELQHLQTKIQKILNFRVYYREGRDPVWKGPGQLIWKGEGAVVIKGGVELKEYPRRKAKIIKDYEPRKRMGDESNLEGAGGADN.

Residue glycine 2 is the site of N-myristoyl glycine; by host attachment. Positions 16-22 (FEHIRLR) match the Nuclear export signal motif. Residues 26-32 (KKKYQIK) carry the Nuclear localization signal motif. Residues 116–144 (NAERNTTETSSGQKKNDKGVTVPPGGSQN) are disordered. 2 CCHC-type zinc fingers span residues 402–419 (VKCYNCGKFGHMQRQCPE) and 423–440 (MRCLKCGKPGHLAKDCRG). A Peptidase A2 domain is found at 532-603 (IRALLDTGAD…TPINIIGRNI (72 aa)). Residue aspartate 537 is the For protease activity; shared with dimeric partner of the active site. One can recognise a Reverse transcriptase domain in the interval 659–849 (EGKISKIGGE…PPYEWMGYKL (191 aa)). Residues aspartate 725, aspartate 800, and aspartate 801 each contribute to the Mg(2+) site. The interval 842 to 850 (YEWMGYKLW) is RT 'primer grip'. The Tryptophan repeat motif motif lies at 1012 to 1028 (WEQWWADYWQVSWIPDW). One can recognise an RNase H type-1 domain in the interval 1048-1171 (IPKEDVYYVD…IDKLVSQGMR (124 aa)). Mg(2+) contacts are provided by aspartate 1057, glutamate 1092, aspartate 1112, and aspartate 1163. An Integrase-type zinc finger spans residues 1177 to 1218 (EKIEEAQEEHERYHNNWRNLADTYGLPQIVAKEIVAMCPKCQ). The Zn(2+) site is built by histidine 1186, histidine 1190, cysteine 1214, and cysteine 1217. The region spanning 1228 to 1378 (VDASPGVWQM…TPAERLINMI (151 aa)) is the Integrase catalytic domain. The Mg(2+) site is built by aspartate 1238 and aspartate 1290. Positions 1397–1444 (FRVYYREGRDPVWKGPGQLIWKGEGAVVIKGGVELKEYPRRKAKIIKD) form a DNA-binding region, integrase-type.

In terms of assembly, homotrimer. Interacts with gp41 (via C-terminus). As to quaternary structure, homodimer. The active site consists of two apposed aspartic acid residues. Heterodimer of p66 RT and p51 RT (RT p66/p51). Heterodimerization of RT is essential for DNA polymerase activity. Despite the sequence identities, p66 RT and p51 RT have distinct folding. In terms of assembly, homotetramer; may further associate as a homohexadecamer. It depends on Mg(2+) as a cofactor. In terms of processing, specific enzymatic cleavages by the viral protease yield mature proteins. The protease is released by autocatalytic cleavage. The polyprotein is cleaved during and after budding, this process is termed maturation. Proteolytic cleavage of p66 RT removes the RNase H domain to yield the p51 RT subunit. Capsid protein p24 is phosphorylated.

Its subcellular location is the virion. It is found in the host nucleus. The protein localises to the host cytoplasm. The protein resides in the host cell membrane. The catalysed reaction is Specific for a P1 residue that is hydrophobic, and P1' variable, but often Pro.. It catalyses the reaction Endohydrolysis of RNA in RNA/DNA hybrids. Three different cleavage modes: 1. sequence-specific internal cleavage of RNA. Human immunodeficiency virus type 1 and Moloney murine leukemia virus enzymes prefer to cleave the RNA strand one nucleotide away from the RNA-DNA junction. 2. RNA 5'-end directed cleavage 13-19 nucleotides from the RNA end. 3. DNA 3'-end directed cleavage 15-20 nucleotides away from the primer terminus.. The enzyme catalyses 3'-end directed exonucleolytic cleavage of viral RNA-DNA hybrid.. It carries out the reaction DNA(n) + a 2'-deoxyribonucleoside 5'-triphosphate = DNA(n+1) + diphosphate. The viral protease is inhibited by many synthetic protease inhibitors (PIs), such as amprenavir, atazanavir, indinavir, loprinavir, nelfinavir, ritonavir and saquinavir. RT can be inhibited either by nucleoside RT inhibitors (NRTIs) or by non nucleoside RT inhibitors (NNRTIs). NRTIs act as chain terminators, whereas NNRTIs inhibit DNA polymerization by binding a small hydrophobic pocket near the RT active site and inducing an allosteric change in this region. Classical NRTIs are abacavir, adefovir (PMEA), didanosine (ddI), lamivudine (3TC), stavudine (d4T), tenofovir (PMPA), zalcitabine (ddC), and zidovudine (AZT). Classical NNRTIs are atevirdine (BHAP U-87201E), delavirdine, efavirenz (DMP-266), emivirine (I-EBU), and nevirapine (BI-RG-587). The tritherapies used as a basic effective treatment of AIDS associate two NRTIs and one NNRTI. Use of protease inhibitors in tritherapy regimens permit more ambitious therapeutic strategies. In terms of biological role, gag-Pol polyprotein and Gag polyprotein may regulate their own translation, by the binding genomic RNA in the 5'-UTR. At low concentration, Gag-Pol and Gag would promote translation, whereas at high concentration, the polyproteins encapsidate genomic RNA and then shut off translation. Its function is as follows. Matrix protein p17 has two main functions: in infected cell, it targets Gag and Gag-pol polyproteins to the plasma membrane via a multipartite membrane-binding signal, that includes its myristointegration complex. The myristoylation signal and the NLS exert conflicting influences its subcellular localization. The key regulation of these motifs might be phosphorylation of a portion of MA molecules on the C-terminal tyrosine at the time of virus maturation, by virion-associated cellular tyrosine kinase. Implicated in the release from host cell mediated by Vpu. Capsid protein p24 forms the conical core that encapsulates the genomic RNA-nucleocapsid complex in the virion. The core is constituted by capsid protein hexamer subunits. The core is disassembled soon after virion entry. Interaction with host PPIA/CYPA protects the virus from restriction by host TRIM5-alpha and from an unknown antiviral activity in host cells. This capsid restriction by TRIM5 is one of the factors which restricts SIV to the simian species. Functionally, nucleocapsid protein p7 encapsulates and protects viral dimeric unspliced (genomic) RNA. Binds these RNAs through its zinc fingers. Facilitates rearangement of nucleic acid secondary structure during retrotranscription of genomic RNA. This capability is referred to as nucleic acid chaperone activity. In terms of biological role, the aspartyl protease mediates proteolytic cleavages of Gag and Gag-Pol polyproteins during or shortly after the release of the virion from the plasma membrane. Cleavages take place as an ordered, step-wise cascade to yield mature proteins. This process is called maturation. Displays maximal activity during the budding process just prior to particle release from the cell. Also cleaves Nef and Vif, probably concomitantly with viral structural proteins on maturation of virus particles. Hydrolyzes host EIF4GI and PABP1 in order to shut off the capped cellular mRNA translation. The resulting inhibition of cellular protein synthesis serves to ensure maximal viral gene expression and to evade host immune response. Its function is as follows. Reverse transcriptase/ribonuclease H (RT) is a multifunctional enzyme that converts the viral dimeric RNA genome into dsDNA in the cytoplasm, shortly after virus entry into the cell. This enzyme displays a DNA polymerase activity that can copy either DNA or RNA templates, and a ribonuclease H (RNase H) activity that cleaves the RNA strand of RNA-DNA heteroduplexes in a partially processive 3' to 5' endonucleasic mode. Conversion of viral genomic RNA into dsDNA requires many steps. A tRNA binds to the primer-binding site (PBS) situated at the 5'-end of the viral RNA. RT uses the 3' end of the tRNA primer to perform a short round of RNA-dependent minus-strand DNA synthesis. The reading proceeds through the U5 region and ends after the repeated (R) region which is present at both ends of viral RNA. The portion of the RNA-DNA heteroduplex is digested by the RNase H, resulting in a ssDNA product attached to the tRNA primer. This ssDNA/tRNA hybridizes with the identical R region situated at the 3' end of viral RNA. This template exchange, known as minus-strand DNA strong stop transfer, can be either intra- or intermolecular. RT uses the 3' end of this newly synthesized short ssDNA to perform the RNA-dependent minus-strand DNA synthesis of the whole template. RNase H digests the RNA template except for two polypurine tracts (PPTs) situated at the 5'-end and near the center of the genome. It is not clear if both polymerase and RNase H activities are simultaneous. RNase H can probably proceed both in a polymerase-dependent (RNA cut into small fragments by the same RT performing DNA synthesis) and a polymerase-independent mode (cleavage of remaining RNA fragments by free RTs). Secondly, RT performs DNA-directed plus-strand DNA synthesis using the PPTs that have not been removed by RNase H as primers. PPTs and tRNA primers are then removed by RNase H. The 3' and 5' ssDNA PBS regions hybridize to form a circular dsDNA intermediate. Strand displacement synthesis by RT to the PBS and PPT ends produces a blunt ended, linear dsDNA copy of the viral genome that includes long terminal repeats (LTRs) at both ends. Integrase catalyzes viral DNA integration into the host chromosome, by performing a series of DNA cutting and joining reactions. This enzyme activity takes place after virion entry into a cell and reverse transcription of the RNA genome in dsDNA. The first step in the integration process is 3' processing. This step requires a complex comprising the viral genome, matrix protein, Vpr and integrase. This complex is called the pre-integration complex (PIC). The integrase protein removes 2 nucleotides from each 3' end of the viral DNA, leaving recessed CA OH's at the 3' ends. In the second step, the PIC enters cell nucleus. This process is mediated through integrase and Vpr proteins, and allows the virus to infect a non dividing cell. This ability to enter the nucleus is specific of lentiviruses, other retroviruses cannot and rely on cell division to access cell chromosomes. In the third step, termed strand transfer, the integrase protein joins the previously processed 3' ends to the 5' ends of strands of target cellular DNA at the site of integration. The 5'-ends are produced by integrase-catalyzed staggered cuts, 5 bp apart. A Y-shaped, gapped, recombination intermediate results, with the 5'-ends of the viral DNA strands and the 3' ends of target DNA strands remaining unjoined, flanking a gap of 5 bp. The last step is viral DNA integration into host chromosome. This involves host DNA repair synthesis in which the 5 bp gaps between the unjoined strands are filled in and then ligated. Since this process occurs at both cuts flanking the SIV genome, a 5 bp duplication of host DNA is produced at the ends of SIV integration. Alternatively, Integrase may catalyze the excision of viral DNA just after strand transfer, this is termed disintegration. The polypeptide is Gag-Pol polyprotein (gag-pol) (Cercopithecidae (Old World monkeys)).